A 49-amino-acid chain; its full sequence is Large ribosomal subunit protein bL33A (49 aa).

Belongs to the bacterial ribosomal protein bL33 family.

The protein is Large ribosomal subunit protein bL33A of Leuconostoc mesenteroides subsp. mesenteroides (strain ATCC 8293 / DSM 20343 / BCRC 11652 / CCM 1803 / JCM 6124 / NCDO 523 / NBRC 100496 / NCIMB 8023 / NCTC 12954 / NRRL B-1118 / 37Y).